Reading from the N-terminus, the 186-residue chain is Golgi apparatus membrane protein-like protein ECHIDNA (186 aa).

N-acetylmethionine is present on Met1. 3 helical membrane passes run 35-55, 108-128, and 132-152; these read ILSALFFNSFVIIFVVTVLLA, FWWTLYLAAAAWFILGVFSLI, and ADYLLVVGVCLSLNVANIIGF.

Belongs to the TVP23 family. As to quaternary structure, component of a trans-Golgi network (TGN)-localized ECH/YIP4 complex made of ECH, YIP4A and YIP4B. Interacts directly with YIP4A and YIP4B.

The protein resides in the golgi apparatus. It is found in the trans-Golgi network membrane. It localises to the early endosome membrane. Mediates trans-Golgi-network trafficking and cell elongation. Required for keeping the appropriate balance between secretory trafficking and vacuolar targeting of a subset of proteins. The ECH/YIP4 complex is involved in the modulation of the trans-Golgi network (TGN)-mediated trafficking of some proteins and cell wall components (e.g. pectin and hemicellulose) to the cell wall in dark-grown hypocotyls and in secretory cells of the seed coat. This is Golgi apparatus membrane protein-like protein ECHIDNA from Arabidopsis thaliana (Mouse-ear cress).